Reading from the N-terminus, the 355-residue chain is Protein RecA (355 aa).

Residue 72–79 (GPESSGKT) coordinates ATP.

Belongs to the RecA family.

The protein resides in the cytoplasm. Can catalyze the hydrolysis of ATP in the presence of single-stranded DNA, the ATP-dependent uptake of single-stranded DNA by duplex DNA, and the ATP-dependent hybridization of homologous single-stranded DNAs. It interacts with LexA causing its activation and leading to its autocatalytic cleavage. This Thermosynechococcus vestitus (strain NIES-2133 / IAM M-273 / BP-1) protein is Protein RecA.